A 308-amino-acid polypeptide reads, in one-letter code: ATP synthase gamma chain (308 aa).

This sequence belongs to the ATPase gamma chain family. As to quaternary structure, F-type ATPases have 2 components, CF(1) - the catalytic core - and CF(0) - the membrane proton channel. CF(1) has five subunits: alpha(3), beta(3), gamma(1), delta(1), epsilon(1). CF(0) has three main subunits: a, b and c.

Its subcellular location is the cell membrane. Produces ATP from ADP in the presence of a proton gradient across the membrane. The gamma chain is believed to be important in regulating ATPase activity and the flow of protons through the CF(0) complex. The protein is ATP synthase gamma chain of Lacticaseibacillus paracasei (strain ATCC 334 / BCRC 17002 / CCUG 31169 / CIP 107868 / KCTC 3260 / NRRL B-441) (Lactobacillus paracasei).